Reading from the N-terminus, the 317-residue chain is Periplasmic [NiFe] hydrogenase small subunit 1 (317 aa).

Positions 1 to 49 (MRFSVGLGKEGAEERLARRGVSRRDFLKFCTAIAVTMGMGPAFAPEVAR) form a signal peptide, tat-type signal. [4Fe-4S] cluster is bound by residues cysteine 67, cysteine 70, cysteine 164, cysteine 200, histidine 238, cysteine 241, cysteine 266, and cysteine 272. 3 residues coordinate [3Fe-4S] cluster: cysteine 281, cysteine 299, and cysteine 302.

It belongs to the [NiFe]/[NiFeSe] hydrogenase small subunit family. As to quaternary structure, heterodimer of a large and a small subunit. [3Fe-4S] cluster serves as cofactor. It depends on [4Fe-4S] cluster as a cofactor. Predicted to be exported by the Tat system. The position of the signal peptide cleavage has not been experimentally proven.

The protein localises to the periplasm. The enzyme catalyses 2 Fe(III)-[cytochrome c3] + H2 = 2 Fe(II)-[cytochrome c3] + 2 H(+). The sequence is that of Periplasmic [NiFe] hydrogenase small subunit 1 (hynB1) from Nitratidesulfovibrio vulgaris (strain ATCC 29579 / DSM 644 / CCUG 34227 / NCIMB 8303 / VKM B-1760 / Hildenborough) (Desulfovibrio vulgaris).